The primary structure comprises 157 residues: SsrA-binding protein (157 aa).

Residues 133 to 157 (LHDKRESEKKRDWGREKGRLLRARG) are disordered. Basic and acidic residues predominate over residues 135–151 (DKRESEKKRDWGREKGR).

This sequence belongs to the SmpB family.

It localises to the cytoplasm. In terms of biological role, required for rescue of stalled ribosomes mediated by trans-translation. Binds to transfer-messenger RNA (tmRNA), required for stable association of tmRNA with ribosomes. tmRNA and SmpB together mimic tRNA shape, replacing the anticodon stem-loop with SmpB. tmRNA is encoded by the ssrA gene; the 2 termini fold to resemble tRNA(Ala) and it encodes a 'tag peptide', a short internal open reading frame. During trans-translation Ala-aminoacylated tmRNA acts like a tRNA, entering the A-site of stalled ribosomes, displacing the stalled mRNA. The ribosome then switches to translate the ORF on the tmRNA; the nascent peptide is terminated with the 'tag peptide' encoded by the tmRNA and targeted for degradation. The ribosome is freed to recommence translation, which seems to be the essential function of trans-translation. The chain is SsrA-binding protein from Bradyrhizobium sp. (strain BTAi1 / ATCC BAA-1182).